The sequence spans 250 residues: Diaminopimelate epimerase (250 aa).

Substrate-binding residues include asparagine 11 and asparagine 60. The Proton donor role is filled by cysteine 69. Residues 70–71 (GN), asparagine 164, and 182–183 (ER) contribute to the substrate site. Cysteine 192 serves as the catalytic Proton acceptor. Substrate is bound at residue 193–194 (GT).

The protein belongs to the diaminopimelate epimerase family. In terms of assembly, homodimer.

Its subcellular location is the cytoplasm. The enzyme catalyses (2S,6S)-2,6-diaminopimelate = meso-2,6-diaminopimelate. Its pathway is amino-acid biosynthesis; L-lysine biosynthesis via DAP pathway; DL-2,6-diaminopimelate from LL-2,6-diaminopimelate: step 1/1. Its function is as follows. Catalyzes the stereoinversion of LL-2,6-diaminopimelate (L,L-DAP) to meso-diaminopimelate (meso-DAP), a precursor of L-lysine and an essential component of the bacterial peptidoglycan. In Nitratiruptor sp. (strain SB155-2), this protein is Diaminopimelate epimerase.